Consider the following 317-residue polypeptide: Methionyl-tRNA formyltransferase (317 aa).

112-115 (SLLP) is a binding site for (6S)-5,6,7,8-tetrahydrofolate.

It belongs to the Fmt family.

It catalyses the reaction L-methionyl-tRNA(fMet) + (6R)-10-formyltetrahydrofolate = N-formyl-L-methionyl-tRNA(fMet) + (6S)-5,6,7,8-tetrahydrofolate + H(+). Attaches a formyl group to the free amino group of methionyl-tRNA(fMet). The formyl group appears to play a dual role in the initiator identity of N-formylmethionyl-tRNA by promoting its recognition by IF2 and preventing the misappropriation of this tRNA by the elongation apparatus. This chain is Methionyl-tRNA formyltransferase, found in Geobacter sulfurreducens (strain ATCC 51573 / DSM 12127 / PCA).